The chain runs to 1465 residues: DNA polymerase III PolC-type (1465 aa).

Positions 431-583 constitute an Exonuclease domain; sequence DVETTGLSAM…YDAEATGRLL (153 aa).

The protein belongs to the DNA polymerase type-C family. PolC subfamily.

Its subcellular location is the cytoplasm. The catalysed reaction is DNA(n) + a 2'-deoxyribonucleoside 5'-triphosphate = DNA(n+1) + diphosphate. Required for replicative DNA synthesis. This DNA polymerase also exhibits 3' to 5' exonuclease activity. The polypeptide is DNA polymerase III PolC-type (Streptococcus pyogenes).